A 699-amino-acid polypeptide reads, in one-letter code: MLDPIIHKFKYGQHTVILDIGTIARQANAAVMVSMSDTTVLVTVVSSNQVRLEQDFFPLVVNYQERTYAAGKFPGGFFRREGRPSENETLTSRLIDRPIRPLFPKGFINDVQVVATVVSVNPQVNPDIVAIIGVSAALSLSDIPFFGPIGAARVGYIKNQYVLNPTTTELSNSKLDLVISGTESNILMVESESCLLSEKEILDAIIFGHEQQQIVIHNINKLVKKVGKTKYSWNEKEVNISLKTYLSELYESRAQDIYCFFDKKERHAQVDSIKKDIVKTVLNSYQHAAVDEKEIMYLLNYLEAQSIRYRILTNKLRIDGRSQDTIRKIDIKTGILPRTHGSALFTRGDTQALVAVTLGTERDAQNIDGLTGIRVDRFLLHYNFPPYCVGEIGVIGAPKRREIGHGRLAKRGMLAVMPNANEFPYTIRVVSEITESNGSSSMASICGTSLALMDAGVPIKAAVAGVAMGLIKEGNDFVVLSDIVSDEDHIGDMDFKVSGSRQGITALQMDIKTDGITYDIINIALKKAKNARLQILDVMEQIIKFPNQEISKFAPRIYSIKVNPDKIKDVIGKGGSVIRSLTEETNTIIDIEDNGIIKIVALDYDKAKQAIRRINDITANVEIGAVYTGKVSHIVEFGAFVTILSGKEGLVHISQISERRINKVTDYLKLGQKVLVKVLEIDRQGRIRLSMKGVHQVSA.

Mg(2+)-binding residues include D488 and D494. Positions 555 to 614 (PRIYSIKVNPDKIKDVIGKGGSVIRSLTEETNTIIDIEDNGIIKIVALDYDKAKQAIRRI) constitute a KH domain. The S1 motif domain maps to 624–692 (GAVYTGKVSH…RQGRIRLSMK (69 aa)).

Belongs to the polyribonucleotide nucleotidyltransferase family. Component of the RNA degradosome, which is a multiprotein complex involved in RNA processing and mRNA degradation. Mg(2+) is required as a cofactor.

It is found in the cytoplasm. It carries out the reaction RNA(n+1) + phosphate = RNA(n) + a ribonucleoside 5'-diphosphate. Involved in mRNA degradation. Catalyzes the phosphorolysis of single-stranded polyribonucleotides processively in the 3'- to 5'-direction. The protein is Polyribonucleotide nucleotidyltransferase of Blochmanniella pennsylvanica (strain BPEN).